The primary structure comprises 132 residues: ATP synthase epsilon chain (132 aa).

The protein belongs to the ATPase epsilon chain family. As to quaternary structure, F-type ATPases have 2 components, CF(1) - the catalytic core - and CF(0) - the membrane proton channel. CF(1) has five subunits: alpha(3), beta(3), gamma(1), delta(1), epsilon(1). CF(0) has three main subunits: a, b and c.

It localises to the cell membrane. In terms of biological role, produces ATP from ADP in the presence of a proton gradient across the membrane. The chain is ATP synthase epsilon chain (atpC) from Bacillus sp. (strain PS3).